A 235-amino-acid chain; its full sequence is MGHKVNPIGMRLQVNRTWDSRWYADTKDYGNLLLEDLAIREFIKEECKQAGVARVIIERPHKKCRVTIHTARPGVIIGKKGADIETLRKKLANMTDSELHLNIVEVRKPEMDAQLVAESIAQQLERRVSFRRAMKRAVQNSMRMGALGIRVNVAGRLGGAEIARTEWYREGRVPLHTLRADIDYALAEASTPYGIIGIKVWIFKGEILEHDPQARDRKAQELQDGPAPRGAGGRR.

Positions 39–107 constitute a KH type-2 domain; sequence IREFIKEECK…ELHLNIVEVR (69 aa). A disordered region spans residues 213–235; it reads QARDRKAQELQDGPAPRGAGGRR.

This sequence belongs to the universal ribosomal protein uS3 family. Part of the 30S ribosomal subunit. Forms a tight complex with proteins S10 and S14.

Binds the lower part of the 30S subunit head. Binds mRNA in the 70S ribosome, positioning it for translation. This chain is Small ribosomal subunit protein uS3, found in Ruegeria pomeroyi (strain ATCC 700808 / DSM 15171 / DSS-3) (Silicibacter pomeroyi).